A 1011-amino-acid chain; its full sequence is Protein translocase subunit SecA, chloroplastic (1011 aa).

A compositionally biased stretch (polar residues) spans 1 to 17; sequence MATSSLCSSFTSQTCNP. Residues 1-22 are disordered; it reads MATSSLCSSFTSQTCNPHSRPH. Residues 1 to 59 constitute a chloroplast transit peptide; sequence MATSSLCSSFTSQTCNPHSRPHRKTLTLPGSVFLCRQFHLNSPSVSKTRRIRTRQSGPV. 164-171 lines the ATP pocket; the sequence is MRTGEGKT. The interval 976–1011 is disordered; it reads QDKMENQKSGKRNARPPTDTNPDPVGTVEPSTSASS.

Belongs to the SecA family.

It is found in the plastid. It localises to the chloroplast stroma. The protein localises to the chloroplast thylakoid membrane. The catalysed reaction is ATP + H2O + chloroplast-proteinSide 1 = ADP + phosphate + chloroplast-proteinSide 2.. Its function is as follows. Has a central role in coupling the hydrolysis of ATP to the transfer of proteins across the thylakoid membrane. Facilitates the transport of precursor proteins from the chloroplast stroma to thylakoid lumen. The chain is Protein translocase subunit SecA, chloroplastic from Pisum sativum (Garden pea).